Reading from the N-terminus, the 905-residue chain is Core protein VP3 (905 aa).

The protein belongs to the orbivirus VP3 family.

It localises to the virion. Functionally, the VP3 protein is one of the five proteins (with VP1, VP4, VP6 and VP7) which form the inner capsid of the virus. The sequence is that of Core protein VP3 (Segment-3) from African horse sickness virus (AHSV).